Consider the following 723-residue polypeptide: Polyribonucleotide nucleotidyltransferase (723 aa).

Positions 488 and 494 each coordinate Mg(2+). Residues proline 555–isoleucine 614 form the KH domain. Residues glycine 624–lysine 692 form the S1 motif domain. Positions lysine 692–lysine 723 are disordered. Residues alanine 693–lysine 723 show a composition bias toward basic and acidic residues.

The protein belongs to the polyribonucleotide nucleotidyltransferase family. Mg(2+) is required as a cofactor.

It localises to the cytoplasm. The enzyme catalyses RNA(n+1) + phosphate = RNA(n) + a ribonucleoside 5'-diphosphate. Functionally, involved in mRNA degradation. Catalyzes the phosphorolysis of single-stranded polyribonucleotides processively in the 3'- to 5'-direction. The polypeptide is Polyribonucleotide nucleotidyltransferase (Listeria monocytogenes serovar 1/2a (strain ATCC BAA-679 / EGD-e)).